The sequence spans 37 residues: Large ribosomal subunit protein bL36 (37 aa).

Belongs to the bacterial ribosomal protein bL36 family.

This is Large ribosomal subunit protein bL36 (rpmJ) from Mycoplasmoides gallisepticum (strain R(low / passage 15 / clone 2)) (Mycoplasma gallisepticum).